The following is a 178-amino-acid chain: Oligoribonuclease (178 aa).

One can recognise an Exonuclease domain in the interval 7-168 (LIWIDLEMTG…DDIRESIAEL (162 aa)). Residue Tyr-128 is part of the active site.

It belongs to the oligoribonuclease family.

The protein resides in the cytoplasm. 3'-to-5' exoribonuclease specific for small oligoribonucleotides. In Pseudomonas savastanoi pv. phaseolicola (strain 1448A / Race 6) (Pseudomonas syringae pv. phaseolicola (strain 1448A / Race 6)), this protein is Oligoribonuclease.